A 290-amino-acid chain; its full sequence is Agroclavine dehydrogenase (290 aa).

This sequence belongs to the fgaFS/easG family. In terms of assembly, monomer.

It carries out the reaction agroclavine + NADP(+) = didehydroagroclavine + NADPH + H(+). It functions in the pathway alkaloid biosynthesis; ergot alkaloid biosynthesis. Its function is as follows. Agroclavine dehydrogenase; part of the gene cluster that mediates the biosynthesis of fungal ergot alkaloid. DmaW catalyzes the first step of ergot alkaloid biosynthesis by condensing dimethylallyl diphosphate (DMAP) and tryptophan to form 4-dimethylallyl-L-tryptophan. The second step is catalyzed by the methyltransferase easF that methylates 4-dimethylallyl-L-tryptophan in the presence of S-adenosyl-L-methionine, resulting in the formation of 4-dimethylallyl-L-abrine. The catalase easC and the FAD-dependent oxidoreductase easE then transform 4-dimethylallyl-L-abrine to chanoclavine-I which is further oxidized by easD in the presence of NAD(+), resulting in the formation of chanoclavine-I aldehyde. Agroclavine dehydrogenase easG then mediates the conversion of chanoclavine-I aldehyde to agroclavine via a non-enzymatic adduct reaction: the substrate is an iminium intermediate that is formed spontaneously from chanoclavine-I aldehyde in the presence of glutathione. The presence of easA is not required to complete this reaction. Further conversion of agroclavine to paspalic acid is a two-step process involving oxidation of agroclavine to elymoclavine and of elymoclavine to paspalic acid, the second step being performed by the elymoclavine oxidase cloA. Paspalic acid is then further converted to D-lysergic acid. Ergopeptines are assembled from D-lysergic acid and three different amino acids by the D-lysergyl-peptide-synthetases composed each of a monomudular and a trimodular nonribosomal peptide synthetase subunit. LpsB and lpsC encode the monomodular subunits responsible for D-lysergic acid activation and incorporation into the ergopeptine backbone. LpsA1 and A2 subunits encode the trimodular nonribosomal peptide synthetase assembling the tripeptide portion of ergopeptines. LpsA1 is responsible for formation of the major ergopeptine, ergotamine, and lpsA2 for alpha-ergocryptine, the minor ergopeptine of the total alkaloid mixture elaborated by C.purpurea. D-lysergyl-tripeptides are assembled by the nonribosomal peptide synthetases and released as N-(D-lysergyl-aminoacyl)-lactams. Cyclolization of the D-lysergyl-tripeptides is performed by the Fe(2+)/2-ketoglutarate-dependent dioxygenase easH which introduces a hydroxyl group into N-(D-lysergyl-aminoacyl)-lactam at alpha-C of the aminoacyl residue followed by spontaneous condensation with the terminal lactam carbonyl group. In Claviceps purpurea (strain 20.1) (Ergot fungus), this protein is Agroclavine dehydrogenase.